The following is a 208-amino-acid chain: Large ribosomal subunit protein uL4 (208 aa).

Residues 50-83 (VKTRAEVSGGGRKPWKQKGTGRARQGSIRAPQWK) are disordered.

This sequence belongs to the universal ribosomal protein uL4 family. In terms of assembly, part of the 50S ribosomal subunit.

In terms of biological role, one of the primary rRNA binding proteins, this protein initially binds near the 5'-end of the 23S rRNA. It is important during the early stages of 50S assembly. It makes multiple contacts with different domains of the 23S rRNA in the assembled 50S subunit and ribosome. Forms part of the polypeptide exit tunnel. This is Large ribosomal subunit protein uL4 from Mycoplasma mycoides subsp. mycoides SC (strain CCUG 32753 / NCTC 10114 / PG1).